The primary structure comprises 1551 residues: Serine/threonine-protein kinase MRCK gamma (1551 aa).

The Protein kinase domain maps to 71 to 337 (FEILKVIGRG…LDDFRKHPFF (267 aa)). ATP is bound by residues 77–85 (IGRGAFGEV) and lysine 100. The Proton acceptor role is filled by aspartate 195. Phosphoserine; by autocatalysis is present on residues serine 216 and serine 228. Threonine 234 is modified (phosphothreonine; by autocatalysis). In terms of domain architecture, AGC-kinase C-terminal spans 338–408 (EGVDWERLAT…TSGSPFDVQS (71 aa)). Coiled-coil stretches lie at residues 442–675 (QPQE…TESN) and 729–801 (KARR…QARG). Positions 578–605 (QESSQAKTVHAAPETNGIGSPEGQSQEA) are disordered. The interval 820–886 (TEKDSAKDPG…SHTLRPRSFP (67 aa)) is disordered. Basic and acidic residues predominate over residues 839–849 (AEAELRPEGRR). The Phorbol-ester/DAG-type zinc finger occupies 877–926 (SHTLRPRSFPSPTKCLRCTSLMLGLGRQGLGCDTCGYFCHSACASQAPPC). The PH domain maps to 946-1065 (GTAYEGFLSV…WLQVLGELQR (120 aa)). Residues 1091-1365 (LPHALCAAVI…RPLNPEGSLF (275 aa)) form the CNH domain. Positions 1436-1449 (ISPPTNFNHLVHVG) constitute a CRIB domain. The interval 1441–1551 (NFNHLVHVGP…PPDPESESSP (111 aa)) is disordered. Basic and acidic residues predominate over residues 1455 to 1468 (PNTRDGTRAQEQKS). Residue serine 1481 is modified to Phosphoserine. Polar residues predominate over residues 1511-1527 (TSLSSESVSCPQGSLSP).

The protein belongs to the protein kinase superfamily. AGC Ser/Thr protein kinase family. DMPK subfamily. As to quaternary structure, homodimer and homotetramer via the coiled coil regions. Interacts tightly with GTP-bound but not GDP-bound CDC42. It depends on Mg(2+) as a cofactor.

It is found in the cytoplasm. The catalysed reaction is L-seryl-[protein] + ATP = O-phospho-L-seryl-[protein] + ADP + H(+). It carries out the reaction L-threonyl-[protein] + ATP = O-phospho-L-threonyl-[protein] + ADP + H(+). With respect to regulation, maintained in an inactive, closed conformation by an interaction between the kinase domain and the negative autoregulatory C-terminal coiled-coil region. Agonist binding to the phorbol ester binding site disrupts this, releasing the kinase domain to allow N-terminus-mediated dimerization and kinase activation by transautophosphorylation. Its function is as follows. May act as a downstream effector of CDC42 in cytoskeletal reorganization. Contributes to the actomyosin contractility required for cell invasion, through the regulation of MYPT1 and thus MLC2 phosphorylation. The polypeptide is Serine/threonine-protein kinase MRCK gamma (Mus musculus (Mouse)).